Consider the following 89-residue polypeptide: Small ribosomal subunit protein uS19 (89 aa).

It belongs to the universal ribosomal protein uS19 family.

Its function is as follows. Protein S19 forms a complex with S13 that binds strongly to the 16S ribosomal RNA. The protein is Small ribosomal subunit protein uS19 of Xylella fastidiosa (strain M23).